The chain runs to 268 residues: Shikimate dehydrogenase (NADP(+)) (268 aa).

Residues 14–16 (SKS) and threonine 61 each bind shikimate. Catalysis depends on lysine 65, which acts as the Proton acceptor. Residues asparagine 86 and aspartate 102 each contribute to the shikimate site. Residues 126–130 (GAGGA), 149–154 (NRTFLK), and methionine 213 contribute to the NADP(+) site. Tyrosine 215 contributes to the shikimate binding site. Glycine 238 contacts NADP(+).

It belongs to the shikimate dehydrogenase family. In terms of assembly, homodimer.

It catalyses the reaction shikimate + NADP(+) = 3-dehydroshikimate + NADPH + H(+). It participates in metabolic intermediate biosynthesis; chorismate biosynthesis; chorismate from D-erythrose 4-phosphate and phosphoenolpyruvate: step 4/7. Functionally, involved in the biosynthesis of the chorismate, which leads to the biosynthesis of aromatic amino acids. Catalyzes the reversible NADPH linked reduction of 3-dehydroshikimate (DHSA) to yield shikimate (SA). This Haemophilus influenzae (strain PittGG) protein is Shikimate dehydrogenase (NADP(+)).